Consider the following 148-residue polypeptide: Antitoxin Xre (148 aa).

This sequence belongs to the MbcA/ParS/Xre antitoxin family. Homodimer. Forms a complex with cognate toxin Rse.

Its function is as follows. Antitoxin component of a type II toxin-antitoxin (TA) system. Neutralizes the activity of cognate toxin Res. The protein is Antitoxin Xre of Yersinia enterocolitica serotype O:8 / biotype 1B (strain NCTC 13174 / 8081).